The sequence spans 700 residues: MSKTRIYEVAKELGMNSKELMEFLEKELNISVKSHMSTIEEETVQVIMDLIEEERQTKKEVKKQKEPSKEKGKSSEQVKVKEKSKEEPVEEKFLREVTITSHDLSLDILAKQIGLEQNDIIKDMFMKGVVLRPGQKLDITMAENIAMNYNVILNFEIEKKETEEGKEQDIEAILAKKWNDIYEKEKDKLAPRPPVVTIMGHVDHGKTTLLDKIRNTHVADKEEGGITQSIGAYQIEYNGQKITFIDTPGHEAFTEMRARGAQVTDIVVLIIAADDGVMPQTIEAYNHAKSANVPIIVAINKIDKPNANVELTKQQMVSKLNLIPEDWGGDTITVLVSAKTGEGIDELLEMILLVSEMQEIRCIPDGKARAVIIESRVDKAMGPLGTVIVKDGILKVGDDFISGSTYGRVRRLINDKGESLIKAVPSTPVQVLGFNDVPNTHSILYVIDSKEEARTLAEKVKEKEEEKSKGPAKRHVKLEDIMQKMEEEEKKKLNILLKASTYGEIEALRNAIQKFENPEIDIEIIHAGIGPVSTSDIMLASASDAIVLGFRVKADSKALKMAEAEGIEVRRYNIIFDLIDDIKKALEGMLEPIQKEELTGNGVIKEEFKIKGVGKIAGVQVNEGYVQRDGGVRIYRNGGLIADVKIKSLKHYKDEVKSIEAPKECGIQFENFEDFTKGDELEFYKHVFVKRELGLEQKTK.

The segment at 58–85 (KKEVKKQKEPSKEKGKSSEQVKVKEKSK) is disordered. Residues 191–365 (PRPPVVTIMG…EMQEIRCIPD (175 aa)) enclose the tr-type G domain. The segment at 200–207 (GHVDHGKT) is G1. 200 to 207 (GHVDHGKT) is a binding site for GTP. The segment at 225–229 (GITQS) is G2. The interval 246–249 (DTPG) is G3. Residues 246-250 (DTPGH) and 300-303 (NKID) each bind GTP. The tract at residues 300–303 (NKID) is G4. Residues 337–339 (SAK) form a G5 region.

This sequence belongs to the TRAFAC class translation factor GTPase superfamily. Classic translation factor GTPase family. IF-2 subfamily.

The protein localises to the cytoplasm. In terms of biological role, one of the essential components for the initiation of protein synthesis. Protects formylmethionyl-tRNA from spontaneous hydrolysis and promotes its binding to the 30S ribosomal subunits. Also involved in the hydrolysis of GTP during the formation of the 70S ribosomal complex. The chain is Translation initiation factor IF-2 from Petrotoga mobilis (strain DSM 10674 / SJ95).